An 818-amino-acid polypeptide reads, in one-letter code: Glycerol-3-phosphate acyltransferase (818 aa).

The short motif at 305–310 is the HXXXXD motif element; it reads HRSHMD.

This sequence belongs to the GPAT/DAPAT family.

Its subcellular location is the cell inner membrane. It catalyses the reaction sn-glycerol 3-phosphate + an acyl-CoA = a 1-acyl-sn-glycero-3-phosphate + CoA. It functions in the pathway phospholipid metabolism; CDP-diacylglycerol biosynthesis; CDP-diacylglycerol from sn-glycerol 3-phosphate: step 1/3. The chain is Glycerol-3-phosphate acyltransferase from Photorhabdus laumondii subsp. laumondii (strain DSM 15139 / CIP 105565 / TT01) (Photorhabdus luminescens subsp. laumondii).